The primary structure comprises 252 residues: Small ribosomal subunit protein uS2 (252 aa).

The protein belongs to the universal ribosomal protein uS2 family.

This Alcanivorax borkumensis (strain ATCC 700651 / DSM 11573 / NCIMB 13689 / SK2) protein is Small ribosomal subunit protein uS2.